The sequence spans 369 residues: Melanoma-associated antigen 10 (369 aa).

Positions 1 to 131 are disordered; it reads MPRAPKRQRC…VLPDSESLPR (131 aa). A compositionally biased stretch (low complexity) spans 39 to 62; it reads SSSTSTSSSFPSSFPSSSSSSSSS. 2 stretches are compositionally biased toward polar residues: residues 85–96 and 107–121; these read QSAQIACSSPSV and EGSS…STLQ. The MAGE domain occupies 134–333; that stretch reads IDEKVTDLVQ…RSFPLWYEEA (200 aa). Residues 340–369 form a disordered region; that stretch reads RAQDRIATTDDTTAMASASSSATGSFSYPE. Over residues 348-369 the composition is skewed to low complexity; sequence TDDTTAMASASSSATGSFSYPE.

Expressed in many tumors of several types, such as melanoma, head and neck squamous cell carcinoma, lung carcinoma and breast carcinoma, but not in normal tissues except for spermatogonia, spermatocytes and placenta.

It localises to the nucleus. Not known, though may play a role in embryonal development and tumor transformation or aspects of tumor progression. This is Melanoma-associated antigen 10 (MAGEA10) from Homo sapiens (Human).